A 127-amino-acid polypeptide reads, in one-letter code: uncharacterized protein (127 aa).

Helical transmembrane passes span 42 to 62 and 78 to 98; these read LLIS…IAFI and GLPI…YYFL.

The protein localises to the membrane. This is an uncharacterized protein from Schizosaccharomyces pombe (strain 972 / ATCC 24843) (Fission yeast).